A 469-amino-acid polypeptide reads, in one-letter code: Protein RUFY3 (469 aa).

2 positions are modified to phosphothreonine: threonine 5 and threonine 12. Phosphoserine occurs at positions 34 and 49. Threonine 51 is modified (phosphothreonine). The RUN domain occupies 95 to 227 (DSDYAPLQQF…IDANFCMKGE (133 aa)). Coiled coils occupy residues 271–362 (NRHL…VEKE) and 422–463 (KSEL…AANK).

As to quaternary structure, interacts with PAK1. Interacts (via C-terminus) with Ras-related Rab-5 proteins. Interacts (via C-terminus) with Ras-related Rap-2 proteins. Interacts with PIK3CA and PIK3R1. Interacts (via N-terminus) with FSCN1; this interaction induces neuron axon development. Interacts with DBN1. Interacts (via the second coiled coil) with GTP-, but not GDP-bound ARL8A and ARL8B. Interacts with dynactin/DCTN1 and the dynein intermediate chain DYNC1I1/2. Directly interacts with DYNC1LI1. In terms of processing, phosphorylated by PAK1.

Its subcellular location is the cytoplasm. It localises to the endomembrane system. It is found in the cell projection. The protein resides in the invadopodium. The protein localises to the growth cone. Its subcellular location is the perikaryon. It localises to the filopodium. It is found in the lamellipodium. The protein resides in the lysosome. ARL8 effector that promotes the coupling of endolysosomes to dynein-dynactin for retrograde transport along microtubules. Acts by binding both GTP-bound ARL8 and dynein-dynactin. In nonneuronal cells, promotes concentration of endolysosomes in the juxtanuclear area. In hippocampal neurons, drives retrograde transport of endolysosomes from the axon to the soma. Plays a role in the generation of neuronal polarity formation and axon growth. Implicated in the formation of a single axon by developing neurons. May inhibit the formation of additional axons by inhibition of PI3K in minor neuronal processes. Plays a role in the formation of F-actin-enriched protrusive structures at the cell periphery. Plays a role in cytoskeletal organization by regulating the subcellular localization of FSCN1 and DBN1 at axonal growth cones. The protein is Protein RUFY3 of Pongo abelii (Sumatran orangutan).